We begin with the raw amino-acid sequence, 113 residues long: MTTSFYFLLVALGLLLYVCQSSFGNQHTRNSDTPKHRCGSELADQYVQLCHGKRNDAGKKRGRASPLWQRQGFLSMLKAKRNEAFFLQRDGRGIVEVCCDNPCTVATLRTFCH.

The N-terminal stretch at 1–21 is a signal peptide; the sequence is MTTSFYFLLVALGLLLYVCQS. A propeptide spanning residues 22-29 is cleaved from the precursor; that stretch reads SFGNQHTR. A 4-hydroxyproline; partial modification is found at Pro-34. Disulfide bonds link Cys-38–Cys-99, Cys-50–Cys-112, and Cys-98–Cys-103. Glu-41 carries the post-translational modification 4-carboxyglutamate. The residue at position 51 (His-51) is a Histidine amide. A propeptide spans 52–92 (c peptide); it reads GKRNDAGKKRGRASPLWQRQGFLSMLKAKRNEAFFLQRDGR. Residue Glu-96 is modified to 4-carboxyglutamate. Position 102 is a 4-hydroxyproline; partial (Pro-102).

It belongs to the insulin family. In terms of assembly, heterodimer of A and B chains; disulfide-linked. It is noteworthy that in this dimer, in contrast to Con-Ins G1, the chain B is amidated and not the chain A. In terms of tissue distribution, expressed by the venom gland.

Its subcellular location is the secreted. Its function is as follows. This venom insulin, from a fish-hunting cone snail, facilitates prey capture by rapidly inducing hypoglycemic shock. It is one of the smallest known insulin found in nature and lacks the C-terminal segment of the B chain that, in human insulin, mediates engagement of the insulin receptor (INSR) and assembly of the hormone's hexameric storage form. Despite lacking this segment, it both binds and activates human insulin receptor (long isoform (HIR-B)) with a high potency (EC(50)=242 nM). In vivo, intraperitoneal injection of this peptide into zebrafish lowers blood glucose with a lower potency than human insulin. In addition, when applied to water, this peptide reduces overall locomotor activity of zebrafish larvae, observed as a significant decrease in the percentage of time spent swimming and movement frequency. When tested on a mouse model of diabetes, this insulin also lowers blood glucose with a 10-fold lower potency than human insulin. This chain is Con-Ins G3, found in Conus geographus (Geography cone).